Consider the following 343-residue polypeptide: Anthranilate phosphoribosyltransferase (343 aa).

5-phospho-alpha-D-ribose 1-diphosphate contacts are provided by residues G84, 87-88 (GD), T92, 94-97 (NIST), 112-120 (KHGNRGVSS), and S124. G84 serves as a coordination point for anthranilate. Position 96 (S96) interacts with Mg(2+). Position 115 (N115) interacts with anthranilate. Position 170 (R170) interacts with anthranilate. Residues D229 and E230 each contribute to the Mg(2+) site.

This sequence belongs to the anthranilate phosphoribosyltransferase family. As to quaternary structure, homodimer. It depends on Mg(2+) as a cofactor.

It carries out the reaction N-(5-phospho-beta-D-ribosyl)anthranilate + diphosphate = 5-phospho-alpha-D-ribose 1-diphosphate + anthranilate. Its pathway is amino-acid biosynthesis; L-tryptophan biosynthesis; L-tryptophan from chorismate: step 2/5. Its function is as follows. Catalyzes the transfer of the phosphoribosyl group of 5-phosphorylribose-1-pyrophosphate (PRPP) to anthranilate to yield N-(5'-phosphoribosyl)-anthranilate (PRA). The protein is Anthranilate phosphoribosyltransferase of Burkholderia multivorans (strain ATCC 17616 / 249).